The following is a 458-amino-acid chain: Retinoic acid receptor alpha (458 aa).

Residues 1–87 (MSSKDNTCPP…PPPLPRIYKP (87 aa)) form a modulating region. Residues 39-78 (GGLPGVQHQPPLSGYSTPSPATIETQSTSSEEIVPSPPTP) are disordered. Positions 52-69 (GYSTPSPATIETQSTSSE) are enriched in polar residues. 2 consecutive NR C4-type zinc fingers follow at residues 88-108 (CFVC…CEGC) and 124-148 (CHRD…LQKC). Residues 88-153 (CFVCQDKSSG…RLQKCFEVGM (66 aa)) constitute a DNA-binding region (nuclear receptor). The segment at 154–182 (SKESVRNDRNKKKKESPKPEAIESYILSP) is hinge. The NR LBD domain occupies 183–417 (ETQDLIEKVQ…LIQEMLENSE (235 aa)). The 9aaTAD signature appears at 407–415 (PLIQEMLEN). The disordered stretch occupies residues 419 to 458 (LDTLGGGASSDAPVTPVAPGSCSPSLSPSSTHSSPSTHSP). The segment covering 439–458 (SCSPSLSPSSTHSSPSTHSP) has biased composition (low complexity).

It belongs to the nuclear hormone receptor family. NR1 subfamily. Heterodimer; with an rxr molecule. Binds DNA preferentially as a rar/rxr heterodimer.

The protein resides in the nucleus. Its function is as follows. Receptor for retinoic acid. Retinoic acid receptors bind as heterodimers to their target response elements in response to their ligands, all-trans or 9-cis retinoic acid, and regulate gene expression in various biological processes. The rar/rxr heterodimers bind to the retinoic acid response elements (RARE) composed of tandem 5'-AGGTCA-3' sites known as DR1-DR5. Required for primary neurogenesis and for anteroposterior neural patterning. This Xenopus laevis (African clawed frog) protein is Retinoic acid receptor alpha (rara).